The sequence spans 224 residues: Artemin (224 aa).

A signal peptide spans 1-39 (MELGLAEPTALSHCLRPRWQSAWWPTLAVLALLSCVTEA). Positions 40 to 111 (SLDPMSRSPA…AALRGARAAR (72 aa)) are excised as a propeptide. The interval 43–124 (PMSRSPAARD…RSSRARTTDA (82 aa)) is disordered. Residues 80 to 95 (RPPPQSPQPAPPPPGP) show a composition bias toward pro residues. The span at 96–116 (ALQSPPAALRGARAARAGTRS) shows a compositional bias: low complexity. 3 disulfide bridges follow: Cys-127-Cys-192, Cys-154-Cys-220, and Cys-158-Cys-222. N-linked (GlcNAc...) asparagine glycosylation is present at Asn-206.

Belongs to the TGF-beta family. GDNF subfamily. As to quaternary structure, homodimer; disulfide-linked. Interacts with GFRA3 coreceptor and RET: forms a 2:2:2 ternary complex composed of ARTN ligand, GFRA3 and RET receptor.

It is found in the secreted. Its function is as follows. Growth factor that supports the survival of sensory and sympathetic peripheral neurons in culture and also supports the survival of dopaminergic neurons of the ventral mid-brain. Acts by binding to its coreceptor, GFRA3, leading to autophosphorylation and activation of the RET receptor. Strong attractant of gut hematopoietic cells thus promoting the formation Peyer's patch-like structures, a major component of the gut-associated lymphoid tissue. The sequence is that of Artemin from Mus musculus (Mouse).